Consider the following 2156-residue polypeptide: Probable capsid protein 3 (2156 aa).

Residues 1319–1345 form a disordered region; sequence NKSNKSNKSNESDKSSESDKSSESSNH. A compositionally biased stretch (basic and acidic residues) spans 1326-1345; the sequence is KSNESDKSSESDKSSESSNH.

The protein belongs to the NCLDV major capsid protein family.

The protein localises to the virion. The sequence is that of Probable capsid protein 3 from Acanthamoeba polyphaga mimivirus (APMV).